Reading from the N-terminus, the 435-residue chain is Aspartate--tRNA(Asp/Asn) ligase (435 aa).

E163 contributes to the L-aspartate binding site. Positions 185–188 (QLYK) are aspartate. R206 contacts L-aspartate. ATP-binding positions include 206-208 (RAE), 214-216 (RHL), and E358. L-aspartate-binding residues include S361 and R365. Residue 406-409 (GAER) participates in ATP binding.

It belongs to the class-II aminoacyl-tRNA synthetase family. Type 2 subfamily. In terms of assembly, homodimer.

It is found in the cytoplasm. It carries out the reaction tRNA(Asx) + L-aspartate + ATP = L-aspartyl-tRNA(Asx) + AMP + diphosphate. Its function is as follows. Aspartyl-tRNA synthetase with relaxed tRNA specificity since it is able to aspartylate not only its cognate tRNA(Asp) but also tRNA(Asn). Reaction proceeds in two steps: L-aspartate is first activated by ATP to form Asp-AMP and then transferred to the acceptor end of tRNA(Asp/Asn). Is slightly more efficient at aminoacylating tRNA(Asn) over tRNA(Asp). This Deinococcus radiodurans (strain ATCC 13939 / DSM 20539 / JCM 16871 / CCUG 27074 / LMG 4051 / NBRC 15346 / NCIMB 9279 / VKM B-1422 / R1) protein is Aspartate--tRNA(Asp/Asn) ligase (aspS2).